The sequence spans 35 residues: Z-limacoditoxin(1)-Dv4 (35 aa).

The signal sequence occupies residues Met-1–Pro-22. Residue Gln-23 is modified to Pyrrolidone carboxylic acid. Pro-32 is modified (proline amide).

It belongs to the limacoditoxin-1 (ACP-like) family. Expressed by the venom secretory cell of the spine. The spine is a cuticular structure containing a single large nucleated venom-secreting cell at its base. It is an independent unit capable of producing, storing and injecting venom. On the back of D.vulnerans caterpillars, spines are grouped together by 50 to 100 to form scoli, of which there are eight in D.vulnerans.

It is found in the secreted. In terms of biological role, potently activates insect GPCR. More precisely, it activates the ACP receptor (ACPR) from the mosquito A.aegypti (EC(50)=3.07 nM) with a potency comparable to that of the endogenous ligand. Has no activity on receptors of the closely related neuropeptides adipokinetic hormone and corazonin. In vivo, does not reveal any observable effects when injected into crickets (A.domesticus). Does not induce increase in intracellular calcium in mouse DRG neurons, suggesting that it does not induce pain. The chain is Z-limacoditoxin(1)-Dv4 from Doratifera vulnerans (Mottled cup moth).